We begin with the raw amino-acid sequence, 381 residues long: MAGGFRPYDQDSCPNLTNSEAPEFSMSVVCKTEPHYFHPQTAILPSVQYSHPYHHYLSQFAPNFVPYYYRLLSRPIMKQEEMDIENYINYEVAAQQTMMRQRTLKPLGQLQIQMPPPIIVNQPVKPVPVKAVPVRRSSPPKRRVINAQLVAVATASGGIKNIEPRVEPLPRLEESFKQQVAKIQKSQHHYEQLFGRLTSMLKTLNQRYDNDAEDVPAPPSKRPRHMSTSSSESHIPDTASEKDEKDTLVQYPHRVQKEDGSAVYVLGPNGTQITAHQYGEVFWTNAPVATRCLLCVVFSSDELATHTLTGKPSPAFYGRERPPKLQLDQRKVDDIVVCVRNRTGGKERVIRATITTKCADTAKKYKRRAKKAQKVAIKEEY.

The tract at residues 210 to 245 (NDAEDVPAPPSKRPRHMSTSSSESHIPDTASEKDEK) is disordered. The 98-residue stretch at 268-365 (PNGTQITAHQ…TKCADTAKKY (98 aa)) folds into the BEN domain.

As to quaternary structure, the heterotrimeric Elba complex consists of Elba1, Elba2 and Elba3.

Its subcellular location is the nucleus. In terms of biological role, the heterotrimeric Elba complex is required for chromatin domain boundary function during early embryogenesis. It binds to a 8-bp sequence 5'-CCAATAAG-3' in the Fab-7 insulator or boundary element in the bithorax complex and contributes to its insulator or boundary activity. Elba2 can act as a transcriptional repressor and binds the palindromic sequence 5'-CCAATTGG-3' to mediate transcriptional repression. The chain is Early boundary activity protein 2 from Drosophila melanogaster (Fruit fly).